A 209-amino-acid chain; its full sequence is Histidine biosynthesis bifunctional protein HisIE (209 aa).

Positions 1 to 123 (MEIEKLLEQV…VLPIDYSLSI (123 aa)) are phosphoribosyl-AMP cyclohydrolase. Residues 124 to 209 (LKELEEIIKR…VMNELRRRRK (86 aa)) are phosphoribosyl-ATP pyrophosphohydrolase.

The protein in the N-terminal section; belongs to the PRA-CH family. In the C-terminal section; belongs to the PRA-PH family.

The protein resides in the cytoplasm. The catalysed reaction is 1-(5-phospho-beta-D-ribosyl)-ATP + H2O = 1-(5-phospho-beta-D-ribosyl)-5'-AMP + diphosphate + H(+). It catalyses the reaction 1-(5-phospho-beta-D-ribosyl)-5'-AMP + H2O = 1-(5-phospho-beta-D-ribosyl)-5-[(5-phospho-beta-D-ribosylamino)methylideneamino]imidazole-4-carboxamide. It participates in amino-acid biosynthesis; L-histidine biosynthesis; L-histidine from 5-phospho-alpha-D-ribose 1-diphosphate: step 2/9. It functions in the pathway amino-acid biosynthesis; L-histidine biosynthesis; L-histidine from 5-phospho-alpha-D-ribose 1-diphosphate: step 3/9. This Pyrococcus furiosus (strain ATCC 43587 / DSM 3638 / JCM 8422 / Vc1) protein is Histidine biosynthesis bifunctional protein HisIE (hisI).